Reading from the N-terminus, the 448-residue chain is Homogentisate 1,2-dioxygenase (448 aa).

His303 (proton acceptor) is an active-site residue. Fe cation contacts are provided by His346 and Glu352. Homogentisate contacts are provided by Tyr361 and His382. Residue His382 coordinates Fe cation.

Belongs to the homogentisate dioxygenase family. Hexamer; dimer of trimers. Fe cation is required as a cofactor.

The catalysed reaction is homogentisate + O2 = 4-maleylacetoacetate + H(+). It participates in amino-acid degradation; L-phenylalanine degradation; acetoacetate and fumarate from L-phenylalanine: step 4/6. Its function is as follows. Involved in the catabolism of homogentisate (2,5-dihydroxyphenylacetate or 2,5-OH-PhAc), a central intermediate in the degradation of phenylalanine and tyrosine. Catalyzes the oxidative ring cleavage of the aromatic ring of homogentisate to yield maleylacetoacetate. This Rhodopseudomonas palustris (strain BisB18) protein is Homogentisate 1,2-dioxygenase.